Reading from the N-terminus, the 255-residue chain is Cytosolic Fe-S cluster assembly factor Nubp2 homolog (255 aa).

14-21 (GKGGVGKS) provides a ligand contact to ATP. Positions 185 and 188 each coordinate [4Fe-4S] cluster.

The protein belongs to the Mrp/NBP35 ATP-binding proteins family. NUBP2/CFD1 subfamily. In terms of assembly, heterotetramer of 2 Nubp1 and 2 Nubp2 chains. The cofactor is [4Fe-4S] cluster.

It is found in the cytoplasm. In terms of biological role, component of the cytosolic iron-sulfur (Fe/S) protein assembly (CIA) machinery. Required for maturation of extramitochondrial Fe-S proteins. The Nubp1-Nubp2 heterotetramer forms a Fe-S scaffold complex, mediating the de novo assembly of an Fe-S cluster and its transfer to target apoproteins. This is Cytosolic Fe-S cluster assembly factor Nubp2 homolog from Drosophila persimilis (Fruit fly).